The chain runs to 177 residues: Large ribosomal subunit protein uL6 (177 aa).

It belongs to the universal ribosomal protein uL6 family. As to quaternary structure, part of the 50S ribosomal subunit.

This protein binds to the 23S rRNA, and is important in its secondary structure. It is located near the subunit interface in the base of the L7/L12 stalk, and near the tRNA binding site of the peptidyltransferase center. The sequence is that of Large ribosomal subunit protein uL6 from Polynucleobacter necessarius subsp. necessarius (strain STIR1).